A 283-amino-acid chain; its full sequence is Pantothenate synthetase (283 aa).

30-37 (MGNLHDGH) lines the ATP pocket. His-37 serves as the catalytic Proton donor. Gln-61 contributes to the (R)-pantoate binding site. Gln-61 is a binding site for beta-alanine. 149–152 (GEKD) lines the ATP pocket. Gln-155 is a (R)-pantoate binding site. Residues Val-178 and 186–189 (LSSR) contribute to the ATP site.

The protein belongs to the pantothenate synthetase family. Homodimer.

It is found in the cytoplasm. It catalyses the reaction (R)-pantoate + beta-alanine + ATP = (R)-pantothenate + AMP + diphosphate + H(+). The protein operates within cofactor biosynthesis; (R)-pantothenate biosynthesis; (R)-pantothenate from (R)-pantoate and beta-alanine: step 1/1. In terms of biological role, catalyzes the condensation of pantoate with beta-alanine in an ATP-dependent reaction via a pantoyl-adenylate intermediate. The sequence is that of Pantothenate synthetase from Salmonella arizonae (strain ATCC BAA-731 / CDC346-86 / RSK2980).